The chain runs to 152 residues: Lipoprotein signal peptidase (152 aa).

3 helical membrane passes run 33-53 (VVPPAFYLTYIMNPGAAFGLL), 58-78 (MLFVTVTVIIIAGVLVGYFKI), and 83-102 (PVLDYGLGLVAGGALGNLAD). Residues D111 and D125 contribute to the active site. A helical transmembrane segment spans residues 120 to 140 (VFNLADTAIVTGAFLLAWALL).

Belongs to the peptidase A8 family.

Its subcellular location is the cell membrane. It catalyses the reaction Release of signal peptides from bacterial membrane prolipoproteins. Hydrolyzes -Xaa-Yaa-Zaa-|-(S,diacylglyceryl)Cys-, in which Xaa is hydrophobic (preferably Leu), and Yaa (Ala or Ser) and Zaa (Gly or Ala) have small, neutral side chains.. It participates in protein modification; lipoprotein biosynthesis (signal peptide cleavage). Its function is as follows. This protein specifically catalyzes the removal of signal peptides from prolipoproteins. The sequence is that of Lipoprotein signal peptidase from Pelotomaculum thermopropionicum (strain DSM 13744 / JCM 10971 / SI).